The following is a 375-amino-acid chain: Growth/differentiation factor 8 (375 aa).

A signal peptide spans 1-18 (MQKLQISVYIYLFVLILA). The propeptide occupies 19–266 (GPVDLNENSE…VTDTPKRSRR (248 aa)). Asn-71 carries N-linked (GlcNAc...) asparagine glycosylation. Cystine bridges form between Cys-272–Cys-282, Cys-281–Cys-340, Cys-309–Cys-372, and Cys-313–Cys-374.

It belongs to the TGF-beta family. In terms of assembly, homodimer; disulfide-linked. Interacts with WFIKKN2, leading to inhibit its activity. Interacts with FSTL3. Post-translationally, synthesized as large precursor molecule that undergoes proteolytic cleavage to generate an N-terminal propeptide and a disulfide linked C-terminal dimer, which is the biologically active molecule. The circulating form consists of a latent complex of the C-terminal dimer and other proteins, including its propeptide, which maintain the C-terminal dimer in a latent, inactive state. Ligand activation requires additional cleavage of the prodomain by a tolloid-like metalloproteinase.

It localises to the secreted. Its function is as follows. Acts specifically as a negative regulator of skeletal muscle growth. The polypeptide is Growth/differentiation factor 8 (MSTN) (Equus caballus (Horse)).